Consider the following 388-residue polypeptide: Succinyl-diaminopimelate desuccinylase (388 aa).

Residue His74 participates in Zn(2+) binding. Asp76 is an active-site residue. Asp107 lines the Zn(2+) pocket. The active-site Proton acceptor is Glu142. Zn(2+)-binding residues include Glu143, Glu171, and His360.

The protein belongs to the peptidase M20A family. DapE subfamily. As to quaternary structure, homodimer. Requires Zn(2+) as cofactor. The cofactor is Co(2+).

The enzyme catalyses N-succinyl-(2S,6S)-2,6-diaminopimelate + H2O = (2S,6S)-2,6-diaminopimelate + succinate. It participates in amino-acid biosynthesis; L-lysine biosynthesis via DAP pathway; LL-2,6-diaminopimelate from (S)-tetrahydrodipicolinate (succinylase route): step 3/3. Catalyzes the hydrolysis of N-succinyl-L,L-diaminopimelic acid (SDAP), forming succinate and LL-2,6-diaminopimelate (DAP), an intermediate involved in the bacterial biosynthesis of lysine and meso-diaminopimelic acid, an essential component of bacterial cell walls. This Rhodopseudomonas palustris (strain BisB5) protein is Succinyl-diaminopimelate desuccinylase.